Here is a 327-residue protein sequence, read N- to C-terminus: Cobalamin biosynthesis protein CobD (327 aa).

Helical transmembrane passes span 61–78, 80–102, 160–182, and 300–322; these read MWLT…GLVI, SILP…ILLA, GIVA…YKFI, and AALV…ASLV.

The protein belongs to the CobD/CbiB family.

It is found in the cell membrane. It functions in the pathway cofactor biosynthesis; adenosylcobalamin biosynthesis. Its function is as follows. Converts cobyric acid to cobinamide by the addition of aminopropanol on the F carboxylic group. The polypeptide is Cobalamin biosynthesis protein CobD (Brucella melitensis biotype 1 (strain ATCC 23456 / CCUG 17765 / NCTC 10094 / 16M)).